A 95-amino-acid chain; its full sequence is Cell division topological specificity factor (95 aa).

Belongs to the MinE family.

In terms of biological role, prevents the cell division inhibition by proteins MinC and MinD at internal division sites while permitting inhibition at polar sites. This ensures cell division at the proper site by restricting the formation of a division septum at the midpoint of the long axis of the cell. The polypeptide is Cell division topological specificity factor (Synechococcus sp. (strain CC9902)).